An 879-amino-acid chain; its full sequence is Alanine--tRNA ligase (879 aa).

Zn(2+)-binding residues include His-570, His-574, Cys-672, and His-676.

This sequence belongs to the class-II aminoacyl-tRNA synthetase family. Requires Zn(2+) as cofactor.

It is found in the cytoplasm. The enzyme catalyses tRNA(Ala) + L-alanine + ATP = L-alanyl-tRNA(Ala) + AMP + diphosphate. Its function is as follows. Catalyzes the attachment of alanine to tRNA(Ala) in a two-step reaction: alanine is first activated by ATP to form Ala-AMP and then transferred to the acceptor end of tRNA(Ala). Also edits incorrectly charged Ser-tRNA(Ala) and Gly-tRNA(Ala) via its editing domain. The protein is Alanine--tRNA ligase of Nitratidesulfovibrio vulgaris (strain ATCC 29579 / DSM 644 / CCUG 34227 / NCIMB 8303 / VKM B-1760 / Hildenborough) (Desulfovibrio vulgaris).